We begin with the raw amino-acid sequence, 833 residues long: Leucine--tRNA ligase (833 aa).

The short motif at 41 to 52 (PYPSGAGLHVGH) is the 'HIGH' region element. The short motif at 610–614 (KMSKS) is the 'KMSKS' region element. Residue Lys613 participates in ATP binding.

Belongs to the class-I aminoacyl-tRNA synthetase family.

The protein resides in the cytoplasm. The catalysed reaction is tRNA(Leu) + L-leucine + ATP = L-leucyl-tRNA(Leu) + AMP + diphosphate. This is Leucine--tRNA ligase from Streptococcus pneumoniae (strain Hungary19A-6).